Reading from the N-terminus, the 188-residue chain is Pyridoxal 5'-phosphate synthase subunit PdxT (188 aa).

Position 47–49 (47–49 (GES)) interacts with L-glutamine. Residue C79 is the Nucleophile of the active site. L-glutamine is bound by residues R105 and 134-135 (IR). Catalysis depends on charge relay system residues H170 and E172.

The protein belongs to the glutaminase PdxT/SNO family. In terms of assembly, in the presence of PdxS, forms a dodecamer of heterodimers. Only shows activity in the heterodimer.

It carries out the reaction aldehydo-D-ribose 5-phosphate + D-glyceraldehyde 3-phosphate + L-glutamine = pyridoxal 5'-phosphate + L-glutamate + phosphate + 3 H2O + H(+). The enzyme catalyses L-glutamine + H2O = L-glutamate + NH4(+). Its pathway is cofactor biosynthesis; pyridoxal 5'-phosphate biosynthesis. In terms of biological role, catalyzes the hydrolysis of glutamine to glutamate and ammonia as part of the biosynthesis of pyridoxal 5'-phosphate. The resulting ammonia molecule is channeled to the active site of PdxS. The chain is Pyridoxal 5'-phosphate synthase subunit PdxT from Listeria monocytogenes serotype 4b (strain CLIP80459).